The primary structure comprises 356 residues: Cdc42 effector protein 4 (356 aa).

Lys-5 bears the N6-methyllysine mark. Ser-18 is modified (phosphoserine). The region spanning 27–41 (ISAPLGDFRHTMHVG) is the CRIB domain. The tract at residues 51–102 (SFLNSKAGEPDGESLDEQPSSSSSKRSLLSRKFRGSKRSQSVTRGEREQRDM) is disordered. At Ser-64 the chain carries Phosphoserine. Basic residues predominate over residues 78–87 (LLSRKFRGSK). Ser-105, Ser-109, and Ser-118 each carry phosphoserine. Disordered regions lie at residues 122–182 (LNEK…LDEQ) and 257–356 (VAAP…EIRV). Residues 123–132 (NEKEAAEKGT) show a composition bias toward basic and acidic residues. Over residues 133–143 (SKLPKSLSSSP) the composition is skewed to low complexity. A phosphoserine mark is found at Ser-138, Ser-140, Ser-142, Ser-174, Ser-292, and Ser-295. Positions 287–315 (AAAAPSPGSARSMGSHTTRDSSSLSSCTS) are enriched in low complexity. Basic and acidic residues predominate over residues 318-344 (LEERSPAFRGPDRARAAVSRQPDKEFS). Residues 345–356 (FMDEEEEDEIRV) show a composition bias toward acidic residues.

The protein belongs to the BORG/CEP family. Interacts with CDC42 and RHOQ, in a GTP-dependent manner. Not detected in any of the adult tissues tested. May be expressed only in fetal or embryonic tissues.

The protein localises to the endomembrane system. It localises to the cytoplasm. Its subcellular location is the cytoskeleton. Functionally, probably involved in the organization of the actin cytoskeleton. May act downstream of CDC42 to induce actin filament assembly leading to cell shape changes. Induces pseudopodia formation, when overexpressed in fibroblasts. The polypeptide is Cdc42 effector protein 4 (CDC42EP4) (Homo sapiens (Human)).